The following is a 187-amino-acid chain: UPF0340 protein SP_0663 (187 aa).

The protein belongs to the UPF0340 family.

This chain is UPF0340 protein SP_0663, found in Streptococcus pneumoniae serotype 4 (strain ATCC BAA-334 / TIGR4).